The chain runs to 180 residues: ATP-dependent protease subunit HslV (180 aa).

Threonine 7 is a catalytic residue. Na(+) contacts are provided by glycine 165, cysteine 168, and threonine 171.

The protein belongs to the peptidase T1B family. HslV subfamily. A double ring-shaped homohexamer of HslV is capped on each side by a ring-shaped HslU homohexamer. The assembly of the HslU/HslV complex is dependent on binding of ATP.

The protein localises to the cytoplasm. The catalysed reaction is ATP-dependent cleavage of peptide bonds with broad specificity.. Its activity is regulated as follows. Allosterically activated by HslU binding. Functionally, protease subunit of a proteasome-like degradation complex believed to be a general protein degrading machinery. This chain is ATP-dependent protease subunit HslV, found in Bacillus cereus (strain G9842).